Consider the following 272-residue polypeptide: NADPH-dependent 7-cyano-7-deazaguanine reductase (272 aa).

Ile-82–Ser-84 lines the substrate pocket. Ser-84 to Lys-85 serves as a coordination point for NADPH. The active-site Thioimide intermediate is Cys-178. Asp-185 (proton donor) is an active-site residue. His-217 to Glu-218 contacts substrate. Residue Arg-246 to Gly-247 coordinates NADPH.

The protein belongs to the GTP cyclohydrolase I family. QueF type 2 subfamily. Homodimer.

The protein localises to the cytoplasm. It carries out the reaction 7-aminomethyl-7-carbaguanine + 2 NADP(+) = 7-cyano-7-deazaguanine + 2 NADPH + 3 H(+). It participates in tRNA modification; tRNA-queuosine biosynthesis. Functionally, catalyzes the NADPH-dependent reduction of 7-cyano-7-deazaguanine (preQ0) to 7-aminomethyl-7-deazaguanine (preQ1). This Stenotrophomonas maltophilia (strain R551-3) protein is NADPH-dependent 7-cyano-7-deazaguanine reductase.